The following is a 176-amino-acid chain: Probable DNA-directed RNA polymerase subunit delta (176 aa).

An HTH HARE-type domain is found at 14 to 81 (CSMIEVVHSV…GENRWGLRSW (68 aa)). Positions 91–176 (ILPQPKPKKK…ETEEEEEEEL (86 aa)) are disordered. The segment covering 106-176 (DGFDDYIEED…ETEEEEEEEL (71 aa)) has biased composition (acidic residues).

It belongs to the RpoE family. In terms of assembly, RNAP is composed of a core of 2 alpha, a beta and a beta' subunits. The core is associated with a delta subunit and one of several sigma factors.

Participates in both the initiation and recycling phases of transcription. In the presence of the delta subunit, RNAP displays an increased specificity of transcription, a decreased affinity for nucleic acids, and an increased efficiency of RNA synthesis because of enhanced recycling. The polypeptide is Probable DNA-directed RNA polymerase subunit delta (Bacillus thuringiensis (strain Al Hakam)).